The sequence spans 1128 residues: Phytochrome A (1128 aa).

Positions 1-21 (MSSSRPTQCSSSSSRTRQSSR) are enriched in low complexity. Residues 1–24 (MSSSRPTQCSSSSSRTRQSSRARI) are disordered. In terms of domain architecture, GAF spans 219-404 (SMEVLCNTVV…VFAVHVNKEF (186 aa)). Residue Cys-324 participates in phytochromobilin binding. PAS domains lie at 620 to 690 (VTSE…LQGK) and 750 to 834 (VEGD…LAGD). Positions 904–1124 (YMRHAINNPL…TFILSVELAS (221 aa)) constitute a Histidine kinase domain.

This sequence belongs to the phytochrome family. As to quaternary structure, homodimer. Contains one covalently linked phytochromobilin chromophore.

Its function is as follows. Regulatory photoreceptor which exists in two forms that are reversibly interconvertible by light: the Pr form that absorbs maximally in the red region of the spectrum and the Pfr form that absorbs maximally in the far-red region. Photoconversion of Pr to Pfr induces an array of morphogenic responses, whereas reconversion of Pfr to Pr cancels the induction of those responses. Pfr controls the expression of a number of nuclear genes including those encoding the small subunit of ribulose-bisphosphate carboxylase, chlorophyll A/B binding protein, protochlorophyllide reductase, rRNA, etc. It also controls the expression of its own gene(s) in a negative feedback fashion. The protein is Phytochrome A (PHYA) of Oryza sativa subsp. indica (Rice).